The sequence spans 338 residues: Tryptophan--tRNA ligase (338 aa).

Residues 18–20 (QPS) and 26–27 (GN) contribute to the ATP site. The short motif at 19-27 (PSGNLTIGN) is the 'HIGH' region element. An L-tryptophan-binding site is contributed by Asp142. Residues 154–156 (GND), Ile193, and 202–206 (KMSKS) contribute to the ATP site. A 'KMSKS' region motif is present at residues 202–206 (KMSKS).

This sequence belongs to the class-I aminoacyl-tRNA synthetase family. Homodimer.

It localises to the cytoplasm. It catalyses the reaction tRNA(Trp) + L-tryptophan + ATP = L-tryptophyl-tRNA(Trp) + AMP + diphosphate + H(+). In terms of biological role, catalyzes the attachment of tryptophan to tRNA(Trp). The chain is Tryptophan--tRNA ligase from Clostridium tetani (strain Massachusetts / E88).